Reading from the N-terminus, the 841-residue chain is Serine/threonine-protein kinase/endoribonuclease IRE1a (841 aa).

Positions 1 to 30 (MPPRCPFLRHLFFLLLLLSPWIMSPCGGAA) are cleaved as a signal peptide. At 31–323 (DDVTYPIVPS…KQKYTYLFGQ (293 aa)) the chain is on the lumenal side. Asn100, Asn104, Asn119, Asn132, and Asn221 each carry an N-linked (GlcNAc...) asparagine glycan. A helical membrane pass occupies residues 324–344 (WSPVKLLAPLVLLGVVVSVFI). Residues 345 to 841 (KKFSSRGSDV…FRKYFKCDII (497 aa)) are Cytoplasmic-facing. Residues 352–382 (SDVSLKAGPSKKKKNRKSAKDTNRQSVPRGQ) form a disordered region. One can recognise a Protein kinase domain in the interval 414–704 (FLSSKEIAKG…ATEVLLHPMF (291 aa)). ATP is bound by residues 420 to 428 (IAKGSNGTV) and Lys442. Asp570 functions as the Proton acceptor in the catalytic mechanism. Residues 707–838 (SEMRLSFLRD…EEVFRKYFKC (132 aa)) enclose the KEN domain.

The protein belongs to the protein kinase superfamily. Ser/Thr protein kinase family. Homodimer; disulfide-linked. Dimer formation is driven by hydrophobic interactions within the N-terminal luminal domains and stabilized by disulfide bridges. Mg(2+) serves as cofactor. Autophosphorylated. In terms of tissue distribution, ubiquitous. Detected in the vascular bundles of young plants, leaves, roots, seedlings and in the receptacles of flowers and vascular bundles of the petals.

The protein localises to the endoplasmic reticulum membrane. It catalyses the reaction L-seryl-[protein] + ATP = O-phospho-L-seryl-[protein] + ADP + H(+). The enzyme catalyses L-threonyl-[protein] + ATP = O-phospho-L-threonyl-[protein] + ADP + H(+). The kinase domain is activated by trans-autophosphorylation. Kinase activity is required for activation of the endoribonuclease domain. Functionally, senses unfolded proteins in the lumen of the endoplasmic reticulum via its N-terminal domain which leads to enzyme auto-activation. The active endoribonuclease domain splices bZIP60 mRNA to generate a new C-terminus, converting it into a potent unfolded-protein response transcriptional activator which then induces transcription of UPR target genes. Involved in organ growth regulation. Plays a role in plant immunity and abiotic stress responses. In Arabidopsis thaliana (Mouse-ear cress), this protein is Serine/threonine-protein kinase/endoribonuclease IRE1a (IRE1A).